Here is a 385-residue protein sequence, read N- to C-terminus: Cellulase CelDZ1 (385 aa).

The helical transmembrane segment at 6–26 threads the bilayer; it reads INKWYFFVGMLVIFAVIISLI. Substrate contacts are provided by residues histidine 87, 91-92, tyrosine 118, and histidine 153; that span reads WF. Residue glutamate 192 is the Proton donor of the active site. Tyrosine 261 provides a ligand contact to substrate. Glutamate 294 acts as the Nucleophile in catalysis. Residues 300–301, tryptophan 328, and 333–335 each bind substrate; these read AS and KNE.

The protein belongs to the glycosyl hydrolase 5 (cellulase A) family. In terms of assembly, monomer.

The protein localises to the cell membrane. The enzyme catalyses Endohydrolysis of (1-&gt;4)-beta-D-glucosidic linkages in cellulose, lichenin and cereal beta-D-glucans.. With respect to regulation, activity is enhanced by 1mM Mn(2+), but is not affected by 1mM Ca(2+), Mg(2+), Zn(2+), K(+), Na(+) or Li(+). Activity is not inhibited by EDTA (in vitro). Functionally, thermostable endoglucanase that has high activity with soluble polymeric substrates containing beta-1,4-glycosidic bonds, such as carboxymethyl cellulose (CMC) and barley beta-D-glucan (in vitro). Has no activity with cellobiose and filter paper. Has no activity with substrates containing beta-1,3-linked glycans, such as laminarin. Likewise, lacks activity with xylan, galactomannan and pectin. This Thermoanaerobacterium sp protein is Cellulase CelDZ1.